The following is a 118-amino-acid chain: Ribosome-binding factor A (118 aa).

Belongs to the RbfA family. Monomer. Binds 30S ribosomal subunits, but not 50S ribosomal subunits or 70S ribosomes.

It localises to the cytoplasm. In terms of biological role, one of several proteins that assist in the late maturation steps of the functional core of the 30S ribosomal subunit. Associates with free 30S ribosomal subunits (but not with 30S subunits that are part of 70S ribosomes or polysomes). Required for efficient processing of 16S rRNA. May interact with the 5'-terminal helix region of 16S rRNA. The polypeptide is Ribosome-binding factor A (Bacillus thuringiensis (strain Al Hakam)).